We begin with the raw amino-acid sequence, 1288 residues long: Peroxidasin homolog (1288 aa).

Residues 1-16 (MNLLLYLLLLVPWVLG) form the signal peptide. Residues 17–51 (SEDGCPAKCTCDKKGFTVDCSNAGLTRIPKGISSN) form the LRRNT domain. LRR repeat units lie at residues 27-49 (CDKK…KGIS), 50-72 (SNVR…DLEG), 73-96 (FPLL…ILDH), 97-120 (LPEL…ASES), 122-143 (PLAS…WLLQ), 145-168 (FPEL…LFEN), and 204-227 (AYCT…LLKC). In terms of domain architecture, LRRCT spans 180-228 (NPWNCDCRVTKVKALLRKVEWERKAYCTNPVELRHQAIDEVEESLLKCA). An N-linked (GlcNAc...) asparagine glycan is attached at Asn247. The interval 304-323 (LRQSHHSNGAPQFTYKPRDN) is disordered. Ig-like C2-type domains follow at residues 314-400 (PQFT…FSLD) and 407-494 (PNIY…AKLT). Cys335 and Cys384 are disulfide-bonded. LRR repeat units lie at residues 356–381 (SSRK…DSGR) and 387–412 (VNSL…IYEG). Cys428 and Cys478 are oxidised to a cystine. An N-linked (GlcNAc...) asparagine glycan is attached at Asn594. An intrachain disulfide couples Cys624 to Cys640. Asp718 contributes to the heme b binding site. His719 acts as the Proton acceptor in catalysis. Asp720 provides a ligand contact to Ca(2+). 2 disulfide bridges follow: Cys739–Cys749 and Cys743–Cys770. Residue Asn740 is glycosylated (N-linked (GlcNAc...) asparagine). Ca(2+) contacts are provided by Thr802, Phe804, Asp806, and Ser808. Asn857 carries N-linked (GlcNAc...) asparagine glycosylation. The heme b site is built by Glu876 and His972. 2 LRR repeats span residues 998–1022 (KAFF…LFAS) and 1049–1073 (SLDL…EYRQ). Cystine bridges form between Cys1075–Cys1132 and Cys1173–Cys1200. One copy of the LRR 12 repeat lies at 1168 to 1189 (LARLLCDNGDEIDRIQKDVFMY).

This sequence belongs to the peroxidase family. XPO subfamily. Ca(2+) is required as a cofactor. Requires heme b as cofactor.

The protein resides in the secreted. Its subcellular location is the extracellular space. It is found in the extracellular matrix. It catalyses the reaction L-lysyl-[collagen] + L-methionyl-[collagen] + H2O2 = [collagen]-L-lysyl-N-S-L-methionyl-[collagen] + 2 H2O + H(+). The catalysed reaction is bromide + H2O2 = hypobromite + H2O. It carries out the reaction L-lysyl-[collagen] + L-methionyl-[collagen] + hypobromite = [collagen]-L-lysyl-N-S-L-methionyl-[collagen] + bromide + H2O + H(+). The enzyme catalyses L-tyrosyl-[protein] + bromide + H2O2 + H(+) = 3-bromo-L-tyrosyl-[protein] + 2 H2O. It catalyses the reaction hypobromite + L-tyrosyl-[protein] + H(+) = 3-bromo-L-tyrosyl-[protein] + H2O. Functionally, catalyzes the two-electron oxidation of bromide by hydrogen peroxide and generates hypobromite as a reactive intermediate which mediates the formation of sulfilimine cross-links between methionine and hydroxylysine residues within an uncross-linked collagen IV NC1 hexamer. Plays a role in the attachment of tissues and in axonal guidance during early developmental stages. May functionally antagonize the peroxidasin pxn-2 to maintain neuronal development. The sequence is that of Peroxidasin homolog from Caenorhabditis briggsae.